The following is a 141-amino-acid chain: VLSAADKTNVKAAWDKIGGHGGEYGAEALERMFLSFPTTKTYFPHFDVSHGSAQVKAHGKKVADALANAASHLDDLPNALSALSDLHAHKLRVDPVNFKLLSHCLLVTLACHHPAEFTPAVHASLDKFLATVATVLTSKYR.

The 141-residue stretch at 1-141 (VLSAADKTNV…VATVLTSKYR (141 aa)) folds into the Globin domain. Position 3 is a phosphoserine (serine 3). Lysine 7 bears the N6-succinyllysine mark. Threonine 8 is modified (phosphothreonine). Lysine 11 bears the N6-succinyllysine mark. Lysine 16 bears the N6-acetyllysine; alternate mark. At lysine 16 the chain carries N6-succinyllysine; alternate. Position 24 is a phosphotyrosine (tyrosine 24). Position 35 is a phosphoserine (serine 35). Lysine 40 is modified (N6-succinyllysine). Residue serine 49 is modified to Phosphoserine. Position 58 (histidine 58) interacts with O2. Histidine 87 provides a ligand contact to heme b. Serine 102 is subject to Phosphoserine. A Phosphothreonine modification is found at threonine 108. Serine 124 carries the post-translational modification Phosphoserine. 2 positions are modified to phosphothreonine: threonine 134 and threonine 137. Serine 138 carries the post-translational modification Phosphoserine.

The protein belongs to the globin family. In terms of assembly, heterotetramer of two alpha chains and two beta chains. In terms of tissue distribution, red blood cells.

Functionally, involved in oxygen transport from the lung to the various peripheral tissues. In terms of biological role, hemopressin acts as an antagonist peptide of the cannabinoid receptor CNR1. Hemopressin-binding efficiently blocks cannabinoid receptor CNR1 and subsequent signaling. The protein is Hemoglobin subunit alpha (HBA) of Ctenodactylus gundi (Northern gundi).